A 536-amino-acid polypeptide reads, in one-letter code: Quinate permease (536 aa).

Residues 1-26 (MTLLALKEDRPTPKAVYNWRVYTCAA) are Cytoplasmic-facing. A helical transmembrane segment spans residues 27-47 (IASFASCMIGYDSSFIGTTLA). Residues 48 to 74 (LPSFTKEFDFASYTPGALALLQSNIVS) lie on the Extracellular side of the membrane. The chain crosses the membrane as a helical span at residues 75-95 (VYQAGAFFGSLFAFATSYFLG). Topologically, residues 96-98 (RRR) are cytoplasmic. The helical transmembrane segment at 99 to 119 (SLIAFSVVFIIGAAIMLAADG) threads the bilayer. At 120-131 (QRRGVDPIIAGR) the chain is on the extracellular side. A helical transmembrane segment spans residues 132 to 152 (VLAGIGVGGASNMVPIYISEL). Residues 153–160 (APPAVRGR) lie on the Cytoplasmic side of the membrane. A helical transmembrane segment spans residues 161–181 (LVGIYELGWQIGGLVGFWINY). The Extracellular portion of the chain corresponds to 182-195 (GVNTTMAPTRSQWL). The N-linked (GlcNAc...) asparagine glycan is linked to N184. Residues 196 to 216 (IPFAVQLIPAGLLFLGSFWIP) form a helical membrane-spanning segment. Residues 217–285 (ESPRWLFANG…SLKQPKVRWR (69 aa)) are Cytoplasmic-facing. A helical transmembrane segment spans residues 286–306 (FFLGGMLFLWQNGSGINAINY). Over 307–327 (YSPTVFRSIGITGTNTGFLTT) the chain is Extracellular. The helical transmembrane segment at 328-349 (GIFGVVKMVLTIIWLLWLVDLV) threads the bilayer. The Cytoplasmic segment spans residues 350–352 (GRR). A helical transmembrane segment spans residues 353 to 373 (RILFVGATGGSLCMWFIGAYI). Residues 374–389 (KIAGPGTTKTEEAKLT) are Extracellular-facing. The helical transmembrane segment at 390 to 410 (SGGIAAIFFFYLWTAFYTPSW) threads the bilayer. At 411-435 (NGTPWVINSEMFDQNTRSLGQASAA) the chain is on the cytoplasmic side. A helical membrane pass occupies residues 436–456 (ANNWFWNFIISRFTPQMFIKM). The Extracellular portion of the chain corresponds to 457–458 (EY). Residues 459–479 (GVYFFFASLMLLSVVFIYFFI) form a helical membrane-spanning segment. The Cytoplasmic segment spans residues 480-536 (PETKSIPLEAMDRLFAIKSVHNANKILMDELNFDRNPEREQSSLDEKDRVTQTENAV). Basic and acidic residues predominate over residues 516-530 (PEREQSSLDEKDRVT). A disordered region spans residues 516-536 (PEREQSSLDEKDRVTQTENAV).

It belongs to the major facilitator superfamily. Sugar transporter (TC 2.A.1.1) family.

Its subcellular location is the membrane. In Neurospora africana, this protein is Quinate permease (qa-y).